A 346-amino-acid polypeptide reads, in one-letter code: T-box protein 12 (346 aa).

Positions 33-48 (DEEDVEVDVEDVDDVD) are enriched in acidic residues. The segment at 33-66 (DEEDVEVDVEDVDDVDLSSIPSKSPERSRGRPKI) is disordered. The segment at residues 86–268 (LWAKFFDLGT…KNPFAKGFRD (183 aa)) is a DNA-binding region (T-box).

The protein localises to the nucleus. In terms of biological role, transcription factor. Involved in cell fate determination; required to pattern the posterior hindgut. Involved in motor neuron fate determination and maintenance, acting as a transcriptional repressor to counteract gene activation by transcription factor unc-3 in a subset of motor neurons. Required throughout development to repress transcription by unc-3, probably acting by binding to specific promoter elements. Represses expression of VA and VB motor neuron-specific effector genes, such as DEG/ENaC channel del-1 and the innexin inx-12, in DA and DB motor neurons. Represses expression of transcription factor bnc-1, perhaps acting directly, in DA and DB motor neurons. The sequence is that of T-box protein 12 (mab-9) from Caenorhabditis elegans.